Here is an 877-residue protein sequence, read N- to C-terminus: GPI ethanolamine phosphate transferase 2 (877 aa).

N190 and N368 each carry an N-linked (GlcNAc...) asparagine glycan. The next 5 membrane-spanning stretches (helical) occupy residues 409–429 (VDIYIGLSILVAMAIVAFGLF), 443–463 (YNWYFIGISIVYSIHFHASSL), 464–484 (IEEEYQIWWFFSIICLFALYF), 528–548 (VDLLWVLNIATYFLTAILIYS), and 570–590 (DFGSLVTFIVTFVTCSISFSF). A glycan (N-linked (GlcNAc...) asparagine) is linked at N611. A run of 6 helical transmembrane segments spans residues 634 to 654 (IHLSKILFYCIGVLIIVRIVL), 683 to 703 (EIVPIFLIFSLVKFSAAKLLA), 716 to 736 (LMIIITLFSLCMQNLSFFSMG), 758 to 778 (VFLVGVLTYCSNFAGPIFWSL), 817 to 837 (LAGFLFYSMAGLSLVASCFNL), and 854 to 876 (FASWTLLTNILIDTISSLSILAL).

It belongs to the PIGG/PIGN/PIGO family. PIGG subfamily.

Its subcellular location is the endoplasmic reticulum membrane. It functions in the pathway glycolipid biosynthesis; glycosylphosphatidylinositol-anchor biosynthesis. In terms of biological role, ethanolamine phosphate transferase involved in glycosylphosphatidylinositol-anchor biosynthesis. Transfers ethanolamine phosphate to the GPI second mannose. This is GPI ethanolamine phosphate transferase 2 (LAS21) from Debaryomyces hansenii (strain ATCC 36239 / CBS 767 / BCRC 21394 / JCM 1990 / NBRC 0083 / IGC 2968) (Yeast).